The primary structure comprises 314 residues: Ribosomal protein L11 methyltransferase (314 aa).

S-adenosyl-L-methionine contacts are provided by Thr152, Gly184, Asp206, and Asn248.

This sequence belongs to the methyltransferase superfamily. PrmA family.

The protein resides in the cytoplasm. It carries out the reaction L-lysyl-[protein] + 3 S-adenosyl-L-methionine = N(6),N(6),N(6)-trimethyl-L-lysyl-[protein] + 3 S-adenosyl-L-homocysteine + 3 H(+). Its function is as follows. Methylates ribosomal protein L11. The polypeptide is Ribosomal protein L11 methyltransferase (Geotalea daltonii (strain DSM 22248 / JCM 15807 / FRC-32) (Geobacter daltonii)).